The chain runs to 297 residues: Homoserine kinase (297 aa).

82-92 serves as a coordination point for ATP; that stretch reads PVSRGLGSSAA.

It belongs to the GHMP kinase family. Homoserine kinase subfamily.

It is found in the cytoplasm. It carries out the reaction L-homoserine + ATP = O-phospho-L-homoserine + ADP + H(+). It functions in the pathway amino-acid biosynthesis; L-threonine biosynthesis; L-threonine from L-aspartate: step 4/5. Its function is as follows. Catalyzes the ATP-dependent phosphorylation of L-homoserine to L-homoserine phosphate. The polypeptide is Homoserine kinase (Clostridium botulinum (strain ATCC 19397 / Type A)).